Reading from the N-terminus, the 397-residue chain is Tryptophan synthase beta chain (397 aa).

K91 carries the N6-(pyridoxal phosphate)lysine modification.

This sequence belongs to the TrpB family. In terms of assembly, tetramer of two alpha and two beta chains. The cofactor is pyridoxal 5'-phosphate.

It carries out the reaction (1S,2R)-1-C-(indol-3-yl)glycerol 3-phosphate + L-serine = D-glyceraldehyde 3-phosphate + L-tryptophan + H2O. It functions in the pathway amino-acid biosynthesis; L-tryptophan biosynthesis; L-tryptophan from chorismate: step 5/5. Its function is as follows. The beta subunit is responsible for the synthesis of L-tryptophan from indole and L-serine. The protein is Tryptophan synthase beta chain of Bacillus cereus (strain ZK / E33L).